The chain runs to 67 residues: ATP synthase F(0) complex subunit 8 (67 aa).

A helical transmembrane segment spans residues 8 to 24 (TWFTTILSTSFSIIHRL). An N6-acetyllysine; alternate modification is found at Lys-54. At Lys-54 the chain carries N6-succinyllysine; alternate. Lys-57 carries the post-translational modification N6-acetyllysine.

It belongs to the ATPase protein 8 family. As to quaternary structure, component of the ATP synthase complex composed at least of ATP5F1A/subunit alpha, ATP5F1B/subunit beta, ATP5MC1/subunit c (homooctomer), MT-ATP6/subunit a, MT-ATP8/subunit 8, ATP5ME/subunit e, ATP5MF/subunit f, ATP5MG/subunit g, ATP5MK/subunit k, ATP5MJ/subunit j, ATP5F1C/subunit gamma, ATP5F1D/subunit delta, ATP5F1E/subunit epsilon, ATP5PF/subunit F6, ATP5PB/subunit b, ATP5PD/subunit d, ATP5PO/subunit OSCP. ATP synthase complex consists of a soluble F(1) head domain (subunits alpha(3) and beta(3)) - the catalytic core - and a membrane F(0) domain - the membrane proton channel (subunits c, a, 8, e, f, g, k and j). These two domains are linked by a central stalk (subunits gamma, delta, and epsilon) rotating inside the F1 region and a stationary peripheral stalk (subunits F6, b, d, and OSCP). Interacts with PRICKLE3.

It is found in the mitochondrion membrane. Functionally, subunit 8, of the mitochondrial membrane ATP synthase complex (F(1)F(0) ATP synthase or Complex V) that produces ATP from ADP in the presence of a proton gradient across the membrane which is generated by electron transport complexes of the respiratory chain. ATP synthase complex consist of a soluble F(1) head domain - the catalytic core - and a membrane F(1) domain - the membrane proton channel. These two domains are linked by a central stalk rotating inside the F(1) region and a stationary peripheral stalk. During catalysis, ATP synthesis in the catalytic domain of F(1) is coupled via a rotary mechanism of the central stalk subunits to proton translocation. In vivo, can only synthesize ATP although its ATP hydrolase activity can be activated artificially in vitro. Part of the complex F(0) domain. This is ATP synthase F(0) complex subunit 8 from Glis glis (Fat dormouse).